We begin with the raw amino-acid sequence, 228 residues long: LexA repressor (228 aa).

A DNA-binding region (H-T-H motif) is located at residues Phe26–Thr46. Active-site for autocatalytic cleavage activity residues include Ser149 and Lys187.

It belongs to the peptidase S24 family. Homodimer.

The enzyme catalyses Hydrolysis of Ala-|-Gly bond in repressor LexA.. Functionally, represses a number of genes involved in the response to DNA damage (SOS response), including recA and lexA. In the presence of single-stranded DNA, RecA interacts with LexA causing an autocatalytic cleavage which disrupts the DNA-binding part of LexA, leading to derepression of the SOS regulon and eventually DNA repair. The sequence is that of LexA repressor from Cereibacter sphaeroides (strain ATCC 17025 / ATH 2.4.3) (Rhodobacter sphaeroides).